The primary structure comprises 198 residues: Cyclin-dependent kinase inhibitor 1B (198 aa).

The span at 1–11 shows a compositional bias: polar residues; that stretch reads MSNVRVSNGSP. Residues 1 to 34 form a disordered region; that stretch reads MSNVRVSNGSPSLERMDARQAEHPKPSACRNLFG. Ser10 carries the post-translational modification Phosphoserine; by UHMK1. A compositionally biased stretch (basic and acidic residues) spans 14 to 25; it reads ERMDARQAEHPK. The segment at 51 to 91 is interaction with CDK2; the sequence is DMEEASQRKWNFDFQNHKPLEGKYEWQEVEKGSLPEFYYRP. Tyr74 carries the post-translational modification Phosphotyrosine; by SRC. The tract at residues 85–198 is disordered; sequence PEFYYRPPRP…KKPGLRRRQT (114 aa). Residue Tyr88 is modified to Phosphotyrosine; by ABL, LYN, SRC and JAK2. At Tyr89 the chain carries Phosphotyrosine. Over residues 126–137 the composition is skewed to basic and acidic residues; that stretch reads EDTHLVDPKTDP. The Nuclear localization signal motif lies at 153 to 169; that stretch reads KRPATDDSSTQNKRANR. Phosphothreonine; by CaMK1, PKB/AKT1 and PIM1 is present on Thr157. A Phosphothreonine modification is found at Thr170. Positions 175 to 186 are enriched in polar residues; that stretch reads SDGSPNAGSVEQ. The residue at position 187 (Thr187) is a Phosphothreonine; by PKB/AKT1, CDK1 and CDK2. The residue at position 198 (Thr198) is a Phosphothreonine; by CaMK1, PKB/AKT1, RPS6KA1, RPS6KA3 and PIM1.

Belongs to the CDI family. In terms of assembly, forms a ternary complex composed of CCNE1, CDK2 and CDKN1B. Interacts directly with CCNE1; the interaction is inhibited by CDK2-dependent phosphorylation on Thr-187. Interacts with COPS5, subunit of the COP9 signalosome complex; the interaction leads to CDKN1B degradation. Interacts with NUP50; the interaction leads to nuclear import and degradation of phosphorylated CDKN1B. Interacts with CCND1 and SNX6. Interacts (Thr-198-phosphorylated form) with 14-3-3 proteins, binds strongly YWHAQ, weakly YWHAE and YWHAH, but not YWHAB nor YWHAZ; the interaction with YWHAQ results in translocation to the cytoplasm. Interacts with AKT1 and LYN; the interactions lead to cytoplasmic mislocation, phosphorylation of CDKN1B and inhibition of cell cycle arrest. Forms a ternary complex with CCNA2 and CDK2; CDKN1B inhibits the kinase activity of CDK2 through conformational rearrangements. Interacts (unphosphorylated form) with CDK2. Forms a complex with CDK2 and SPDYA, but does not directly interact with SPDYA. Forms a ternary complex composed of cyclin D, CDK4 and CDKN1B. Interacts (phosphorylated on Tyr-88 and Tyr-89) with CDK4; the interaction is required for cyclin D and CDK4 complex assembly, induces nuclear translocation and activates the CDK4 kinase activity. Interacts with GRB2. Interacts with PIM1. Identified in a complex with SKP1, SKP2 and CKS1B. Interacts with UHMK1; the interaction leads to cytoplasmic mislocation, phosphorylation of CDKN1B and inhibition of cell cycle arrest. Also interacts with CDK1. Dephosphorylated on Thr-187 by PPM1H, leading to CDKN1B stability. Interacts with HSPA8; the interaction may be associated with susceptibility to ubiquitination. Phosphorylated; phosphorylation occurs on serine, threonine and tyrosine residues. Phosphorylation on Ser-10 is the major site of phosphorylation in resting cells, takes place at the G(0)-G(1) phase and leads to protein stability. Phosphorylation on other sites is greatly enhanced by mitogens, growth factors, cMYC and in certain cancer cell lines. The phosphorylated form found in the cytoplasm is inactivate. Phosphorylation on Thr-198 is required for interaction with 14-3-3 proteins. Phosphorylation on Thr-187, by CDK1 and CDK2 leads to protein ubiquitination and proteasomal degradation. Tyrosine phosphorylation promotes this process. Phosphorylation by PKB/AKT1 can be suppressed by LY294002, an inhibitor of the catalytic subunit of PI3K. Phosphorylation on Tyr-88 and Tyr-89 has no effect on binding CDK2, but is required for binding CDK4. Dephosphorylated on tyrosine residues by G-CSF. In terms of processing, ubiquitinated; in the cytoplasm by the KPC complex (composed of RNF123/KPC1 and UBAC1/KPC2) and, in the nucleus, by SCF(SKP2). The latter requires prior phosphorylation on Thr-187. Ubiquitinated; by a TRIM21-containing SCF(SKP2)-like complex; leads to its degradation. Post-translationally, subject to degradation in the lysosome. Interaction with SNX6 promotes lysosomal degradation. Expressed in kidney (at protein level). Expressed in all tissues tested. Highest levels in skeletal muscle, lowest in liver and kidney.

It is found in the nucleus. Its subcellular location is the cytoplasm. The protein localises to the endosome. Important regulator of cell cycle progression. Inhibits the kinase activity of CDK2 bound to cyclin A, but has little inhibitory activity on CDK2 bound to SPDYA. Involved in G1 arrest. Potent inhibitor of cyclin E- and cyclin A-CDK2 complexes. Forms a complex with cyclin type D-CDK4 complexes and is involved in the assembly, stability, and modulation of CCND1-CDK4 complex activation. Acts either as an inhibitor or an activator of cyclin type D-CDK4 complexes depending on its phosphorylation state and/or stoichometry. The chain is Cyclin-dependent kinase inhibitor 1B from Homo sapiens (Human).